The following is a 224-amino-acid chain: ATP synthase subunit a (224 aa).

6 helical membrane passes run 17–37 (LSLNWLSTFLGLLMIPSIYWL), 72–92 (IFISLFSLILFNNFMGLFPYI), 99–119 (LTLTLSLALPLWLCFMLYGWI), 125–145 (MFAHLVPQGTPAVLMPFMVCI), 170–190 (LLLTLLGNTGPSMSYLLVTFL), and 195–215 (IALLVLESAVAMIQSYVFAVL).

Belongs to the ATPase A chain family. In terms of assembly, F-type ATPases have 2 components, CF(1) - the catalytic core - and CF(0) - the membrane proton channel. CF(1) has five subunits: alpha(3), beta(3), gamma(1), delta(1), epsilon(1). CF(0) has three main subunits: a, b and c.

It localises to the mitochondrion inner membrane. Functionally, mitochondrial membrane ATP synthase (F(1)F(0) ATP synthase or Complex V) produces ATP from ADP in the presence of a proton gradient across the membrane which is generated by electron transport complexes of the respiratory chain. F-type ATPases consist of two structural domains, F(1) - containing the extramembraneous catalytic core and F(0) - containing the membrane proton channel, linked together by a central stalk and a peripheral stalk. During catalysis, ATP synthesis in the catalytic domain of F(1) is coupled via a rotary mechanism of the central stalk subunits to proton translocation. Key component of the proton channel; it may play a direct role in the translocation of protons across the membrane. The sequence is that of ATP synthase subunit a (mt:ATPase6) from Drosophila mauritiana (Fruit fly).